The sequence spans 24 residues: 60 kDa chaperonin, mitochondrial (24 aa).

It belongs to the chaperonin (HSP60) family. In terms of assembly, forms a single seven-member ring complex, in tight association with the p63 protein. In terms of tissue distribution, testis.

Its subcellular location is the mitochondrion. Functionally, implicated in mitochondrial protein import and macromolecular assembly. May facilitate the correct folding of imported proteins. May also prevent misfolding and promote the refolding and proper assembly of unfolded polypeptides generated under stress conditions in the mitochondrial matrix. The chain is 60 kDa chaperonin, mitochondrial from Heliothis virescens (Tobacco budworm moth).